Reading from the N-terminus, the 821-residue chain is Dapper homolog 1 (821 aa).

A coiled-coil region spans residues 88 to 136; sequence LNTEEKLLEENILLLRKQLNCLRRRDAGLINQLQELDRQISDLRLDTET. Disordered regions lie at residues 288 to 312, 386 to 432, 564 to 615, and 627 to 655; these read SKPG…SSWH, QDAS…STTN, NSAS…KTKR, and ERHT…VLAK. Over residues 388 to 400 the composition is skewed to low complexity; that stretch reads ASATSTEPSTASP. Over residues 401–432 the composition is skewed to polar residues; the sequence is QRQWSAESKGGTPQNGAYLSSSQPQNSYSTTN. Composition is skewed to basic residues over residues 584–593, 601–615, and 639–649; these read DKHRTGSRRT, HLHK…KTKR, and AQRHHGHHRHH. The short motif at 818 to 821 is the PDZ-binding element; sequence MTTV.

This sequence belongs to the dapper family. As to quaternary structure, interacts with dvl2.

Its subcellular location is the cytoplasm. Its function is as follows. Involved in regulation of intracellular signaling pathways during development. Specifically thought to play a role in canonical and/or non-canonical Wnt signaling pathways through interaction with DSH (Dishevelled) family proteins. Binds to dvl2 and may regulate the degradation of ctnnb1/beta-catenin, thereby modulating the transcriptional activation of target genes of the Wnt signaling pathway. Seems to activate the canonical Wnt signaling pathway. The polypeptide is Dapper homolog 1 (dact1) (Danio rerio (Zebrafish)).